The sequence spans 330 residues: AH receptor-interacting protein (330 aa).

The region spanning 31–121 is the PPIase FKBP-type domain; sequence GTKATFHYRT…KDPLEGQRHC (91 aa). Serine 43 bears the Phosphoserine mark. 3 TPR repeats span residues 179 to 212, 231 to 264, and 265 to 298; these read VPLI…LKNL, TPLL…YDDN, and VKAY…DPAL.

Interacts with RET in the pituitary gland; this interaction prevents the formation of the AIP-survivin complex. In terms of tissue distribution, widely expressed. Higher levels seen in the heart, placenta and skeletal muscle. Not expressed in the liver.

The protein localises to the cytoplasm. In terms of biological role, may play a positive role in AHR-mediated (aromatic hydrocarbon receptor) signaling, possibly by influencing its receptivity for ligand and/or its nuclear targeting. Cellular negative regulator of the hepatitis B virus (HBV) X protein. This is AH receptor-interacting protein (AIP) from Homo sapiens (Human).